A 261-amino-acid chain; its full sequence is Cytochrome c oxidase subunit 3 (261 aa).

Topologically, residues 1 to 15 are mitochondrial matrix; sequence MTHQTHACHMVNPSP. The helical transmembrane segment at 16 to 34 threads the bilayer; it reads WPLTGALSGLLMTSGLIMW. Residues 35–40 lie on the Mitochondrial intermembrane side of the membrane; the sequence is FHFNST. The chain crosses the membrane as a helical span at residues 41 to 66; that stretch reads TLLMLGLTTNMLTMYQWWRDVIREST. Residues 67–72 are Mitochondrial matrix-facing; the sequence is FQGHHT. The chain crosses the membrane as a helical span at residues 73-105; sequence PNVQKGLRYGMILFIISEVLFFTGFFWAFYHSS. The Mitochondrial intermembrane segment spans residues 106-128; that stretch reads LAPTPELGGCWPPTGIHPLNPLE. Residues 129-152 form a helical membrane-spanning segment; sequence VPLLNTSVLLASGVSITWAHHSLM. The Mitochondrial matrix portion of the chain corresponds to 153-155; it reads EGN. Residues 156–183 traverse the membrane as a helical segment; the sequence is RNHMLQALFITIALGVYFTLLQASEYYE. At 184 to 190 the chain is on the mitochondrial intermembrane side; sequence APFTISD. A helical transmembrane segment spans residues 191 to 223; that stretch reads GVYGSTFFVATGFHGLHVIIGSTFLIVCFFRQL. At 224 to 232 the chain is on the mitochondrial matrix side; that stretch reads KFHFTSSHH. The chain crosses the membrane as a helical span at residues 233 to 256; that stretch reads FGFEAAAWYWHFVDVVWLFLYVSI. Topologically, residues 257 to 261 are mitochondrial intermembrane; sequence YWWGS.

It belongs to the cytochrome c oxidase subunit 3 family. As to quaternary structure, component of the cytochrome c oxidase (complex IV, CIV), a multisubunit enzyme composed of 14 subunits. The complex is composed of a catalytic core of 3 subunits MT-CO1, MT-CO2 and MT-CO3, encoded in the mitochondrial DNA, and 11 supernumerary subunits COX4I, COX5A, COX5B, COX6A, COX6B, COX6C, COX7A, COX7B, COX7C, COX8 and NDUFA4, which are encoded in the nuclear genome. The complex exists as a monomer or a dimer and forms supercomplexes (SCs) in the inner mitochondrial membrane with NADH-ubiquinone oxidoreductase (complex I, CI) and ubiquinol-cytochrome c oxidoreductase (cytochrome b-c1 complex, complex III, CIII), resulting in different assemblies (supercomplex SCI(1)III(2)IV(1) and megacomplex MCI(2)III(2)IV(2)).

It localises to the mitochondrion inner membrane. It catalyses the reaction 4 Fe(II)-[cytochrome c] + O2 + 8 H(+)(in) = 4 Fe(III)-[cytochrome c] + 2 H2O + 4 H(+)(out). Its function is as follows. Component of the cytochrome c oxidase, the last enzyme in the mitochondrial electron transport chain which drives oxidative phosphorylation. The respiratory chain contains 3 multisubunit complexes succinate dehydrogenase (complex II, CII), ubiquinol-cytochrome c oxidoreductase (cytochrome b-c1 complex, complex III, CIII) and cytochrome c oxidase (complex IV, CIV), that cooperate to transfer electrons derived from NADH and succinate to molecular oxygen, creating an electrochemical gradient over the inner membrane that drives transmembrane transport and the ATP synthase. Cytochrome c oxidase is the component of the respiratory chain that catalyzes the reduction of oxygen to water. Electrons originating from reduced cytochrome c in the intermembrane space (IMS) are transferred via the dinuclear copper A center (CU(A)) of subunit 2 and heme A of subunit 1 to the active site in subunit 1, a binuclear center (BNC) formed by heme A3 and copper B (CU(B)). The BNC reduces molecular oxygen to 2 water molecules using 4 electrons from cytochrome c in the IMS and 4 protons from the mitochondrial matrix. This is Cytochrome c oxidase subunit 3 (MT-CO3) from Gazella saudiya (Saudi gazelle).